The sequence spans 184 residues: ATP synthase subunit b (184 aa).

Residues 16-36 (LIPPIPELVIGLIAFVIVFGF) traverse the membrane as a helical segment.

This sequence belongs to the ATPase B chain family. In terms of assembly, F-type ATPases have 2 components, F(1) - the catalytic core - and F(0) - the membrane proton channel. F(1) has five subunits: alpha(3), beta(3), gamma(1), delta(1), epsilon(1). F(0) has three main subunits: a(1), b(2) and c(10-14). The alpha and beta chains form an alternating ring which encloses part of the gamma chain. F(1) is attached to F(0) by a central stalk formed by the gamma and epsilon chains, while a peripheral stalk is formed by the delta and b chains.

It is found in the cell membrane. Functionally, f(1)F(0) ATP synthase produces ATP from ADP in the presence of a proton or sodium gradient. F-type ATPases consist of two structural domains, F(1) containing the extramembraneous catalytic core and F(0) containing the membrane proton channel, linked together by a central stalk and a peripheral stalk. During catalysis, ATP synthesis in the catalytic domain of F(1) is coupled via a rotary mechanism of the central stalk subunits to proton translocation. In terms of biological role, component of the F(0) channel, it forms part of the peripheral stalk, linking F(1) to F(0). This Streptomyces coelicolor (strain ATCC BAA-471 / A3(2) / M145) protein is ATP synthase subunit b.